A 168-amino-acid chain; its full sequence is Small ribosomal subunit protein uS5 (168 aa).

Positions 13–76 constitute an S5 DRBM domain; the sequence is LQEKLIAVNR…EKARRNMVTV (64 aa).

This sequence belongs to the universal ribosomal protein uS5 family. In terms of assembly, part of the 30S ribosomal subunit. Contacts proteins S4 and S8.

Its function is as follows. With S4 and S12 plays an important role in translational accuracy. Functionally, located at the back of the 30S subunit body where it stabilizes the conformation of the head with respect to the body. The protein is Small ribosomal subunit protein uS5 of Shewanella amazonensis (strain ATCC BAA-1098 / SB2B).